The chain runs to 150 residues: Transcriptional repressor NrdR (150 aa).

The segment at 3–34 is a zinc-finger region; it reads CPFCNFEESKVVDSRATDDNTTIRRRRECLNC. The ATP-cone domain maps to 49–139; the sequence is VLVVKKDLTR…VYRQFKDINT (91 aa).

This sequence belongs to the NrdR family. Requires Zn(2+) as cofactor.

Functionally, negatively regulates transcription of bacterial ribonucleotide reductase nrd genes and operons by binding to NrdR-boxes. The sequence is that of Transcriptional repressor NrdR from Clostridium botulinum (strain Alaska E43 / Type E3).